We begin with the raw amino-acid sequence, 197 residues long: Adenylyl-sulfate kinase (197 aa).

Residue 31-38 (GLSGAGKS) coordinates ATP. Ser105 functions as the Phosphoserine intermediate in the catalytic mechanism.

It belongs to the APS kinase family.

The enzyme catalyses adenosine 5'-phosphosulfate + ATP = 3'-phosphoadenylyl sulfate + ADP + H(+). It functions in the pathway sulfur metabolism; hydrogen sulfide biosynthesis; sulfite from sulfate: step 2/3. In terms of biological role, catalyzes the synthesis of activated sulfate. This Aeromonas hydrophila subsp. hydrophila (strain ATCC 7966 / DSM 30187 / BCRC 13018 / CCUG 14551 / JCM 1027 / KCTC 2358 / NCIMB 9240 / NCTC 8049) protein is Adenylyl-sulfate kinase.